We begin with the raw amino-acid sequence, 468 residues long: Probable xyloglucan galactosyltransferase GT13 (468 aa).

Residues 1 to 18 (MDKFNPKKEKTVKKRALK) lie on the Cytoplasmic side of the membrane. The chain crosses the membrane as a helical; Signal-anchor for type II membrane protein span at residues 19–35 (VLTEISPTPLFSMLFLL). Topologically, residues 36 to 468 (HISQIATYLS…RVSLFKMTRI (433 aa)) are lumenal. 5 N-linked (GlcNAc...) asparagine glycosylation sites follow: Asn53, Asn116, Asn153, Asn240, and Asn412.

Belongs to the glycosyltransferase 47 family. Expressed in roots, hypocotyls, cotyledons, leaves, stems, petals and carpels.

The protein resides in the golgi apparatus membrane. Functionally, functions in xyloglucan synthesis by adding side chains to the xylosylated glucan backbone. Involved in the galactosylation of hemicellulose xyloglucan. The protein is Probable xyloglucan galactosyltransferase GT13 of Arabidopsis thaliana (Mouse-ear cress).